A 132-amino-acid chain; its full sequence is Salivary protein 15 Iper-2 (132 aa).

An N-terminal signal peptide occupies residues 1–18 (MKVVCIIVLFVIVAVNES). N-linked (GlcNAc...) asparagine glycosylation is found at Asn24, Asn36, Asn62, Asn89, and Asn101. The CD4-binding stretch occupies residues 113-132 (GPNGQTCADKSQCVGHIPGC).

The protein belongs to the salp15 family. In terms of assembly, interacts with host CD4. Interacts with host DC-SIGN (CD209). (Microbial infection) Interacts with Borrelia outer surface protein C (OspC). Expressed in salivary glands from feeding female ticks. Highly expressed 1 day after start of feeding, and weakly expressed at the initiation of feeding and 4 days after start of feeding.

It localises to the secreted. Salivary tick protein that downregulates host immune system by binding to both dendritic cells, and CD4(+) T cells. Specifically binds to the CD4 coreceptor on T cells. This interaction prevents the activation of the Src kinase, Lck, and its downstream substrate Zap-70, and results in deficient activation of PLCgamma1, the repression of calcium fluxes triggered by T-cell antigen receptor (TCR) ligation, and a subsequent reduction in interleukin-2 production. This salivary protein also binds to DC-SIGN (CD209) on dendritic cells (DC) and activates the Raf-1 kinase/MEK signaling pathway that results in down-regulating expression of pro-inflammatory cytokines. Furthermore, it inhibits T cell proliferation induced by DCs. It also inhibits in vitro keratinocyte inflammation induced by Borrelia burgdorferi or by the major outer surface protein (OspC) of Borrelia. In addition, it downregulates chemokines and monocyte chemoattractant protein 1, as well as several antimicrobial peptides such as defensins, cathelicidin, psoriasin, and RNase 7. Apart from its immunomodulatory activities, it is also associated with protection of Borrelia spirochetes from antibody-mediated killing through its binding to OspC. In vivo, tests on different immune disease animal models show promising therapeutic results, e.g., in inhibiting HIV infection, experimental autoimmune encephalomyelitis, transplantation rejection, and asthma. Functionally, (Microbial infection) Protects Borrelia garinii from anti-Borrelia antibody-mediated cytotoxicity in vitro. May facilitate B.garinii transmission in mouse model. In terms of biological role, (Microbial infection) Protects Borrelia burgdorferi from anti-Borrelia antibody-mediated cytotoxicity in vitro. Its function is as follows. (Microbial infection) Protects Borrelia afzelii from anti-Borrelia antibody-mediated cytotoxicity in vitro. The protein is Salivary protein 15 Iper-2 of Ixodes persulcatus (Taiga tick).